A 213-amino-acid polypeptide reads, in one-letter code: Protein Syd (213 aa).

Belongs to the Syd family.

It localises to the cell inner membrane. In terms of biological role, interacts with the SecY protein in vivo. May bind preferentially to an uncomplexed state of SecY, thus functioning either as a chelating agent for excess SecY in the cell or as a regulatory factor that negatively controls the translocase function. The polypeptide is Protein Syd (Shewanella pealeana (strain ATCC 700345 / ANG-SQ1)).